The sequence spans 230 residues: Dephospho-CoA kinase (230 aa).

A disordered region spans residues M1 to H20. The region spanning V26–L225 is the DPCK domain. Position 34–39 (G34–A39) interacts with ATP.

The protein belongs to the CoaE family.

It localises to the cytoplasm. The catalysed reaction is 3'-dephospho-CoA + ATP = ADP + CoA + H(+). Its pathway is cofactor biosynthesis; coenzyme A biosynthesis; CoA from (R)-pantothenate: step 5/5. Its function is as follows. Catalyzes the phosphorylation of the 3'-hydroxyl group of dephosphocoenzyme A to form coenzyme A. This Psychrobacter arcticus (strain DSM 17307 / VKM B-2377 / 273-4) protein is Dephospho-CoA kinase.